We begin with the raw amino-acid sequence, 347 residues long: Haptoglobin (347 aa).

The first 18 residues, 1–18 (MSALGAVIALLLWGQLFA), serve as a signal peptide directing secretion. In terms of domain architecture, Sushi spans 31 to 88 (DGCPKPPQIAHGYVEHSVRYQCKNYYRLRTEGDGVYTLNSEKQWINKAVGDKLPECEA). Cystine bridges form between Cys52-Cys86, Cys90-Cys207, Cys250-Cys281, and Cys292-Cys322. Positions 103 to 347 (ILGGHLDAKG…DWVQKTIAKN (245 aa)) constitute a Peptidase S1 domain. Residues Asn125, Asn148, Asn152, and Asn182 are each glycosylated (N-linked (GlcNAc...) asparagine). An interaction with CD163 region spans residues 259-264 (VPEKKT).

The protein belongs to the peptidase S1 family. In terms of assembly, tetramer of two alpha and two beta chains; disulfide-linked. The hemoglobin/haptoglobin complex is composed of a haptoglobin dimer bound to two hemoglobin alpha-beta dimers. Interacts with CD163. Interacts with ERGIC3.

It is found in the secreted. Its function is as follows. As a result of hemolysis, hemoglobin is found to accumulate in the kidney and is secreted in the urine. Haptoglobin captures, and combines with free plasma hemoglobin to allow hepatic recycling of heme iron and to prevent kidney damage. Haptoglobin also acts as an antioxidant, has antibacterial activity and plays a role in modulating many aspects of the acute phase response. Hemoglobin/haptoglobin complexes are rapidly cleared by the macrophage CD163 scavenger receptor expressed on the surface of liver Kupfer cells through an endocytic lysosomal degradation pathway. This is Haptoglobin (HP) from Pongo abelii (Sumatran orangutan).